A 195-amino-acid chain; its full sequence is GTP cyclohydrolase 1 (195 aa).

Cys86, His89, and Cys158 together coordinate Zn(2+).

This sequence belongs to the GTP cyclohydrolase I family. As to quaternary structure, homomer.

The enzyme catalyses GTP + H2O = 7,8-dihydroneopterin 3'-triphosphate + formate + H(+). The protein operates within cofactor biosynthesis; 7,8-dihydroneopterin triphosphate biosynthesis; 7,8-dihydroneopterin triphosphate from GTP: step 1/1. In Ruminiclostridium cellulolyticum (strain ATCC 35319 / DSM 5812 / JCM 6584 / H10) (Clostridium cellulolyticum), this protein is GTP cyclohydrolase 1.